We begin with the raw amino-acid sequence, 156 residues long: Cyanate hydratase (156 aa).

Residues Arg-96, Glu-99, and Ser-122 contribute to the active site.

It belongs to the cyanase family.

The catalysed reaction is cyanate + hydrogencarbonate + 3 H(+) = NH4(+) + 2 CO2. Its function is as follows. Catalyzes the reaction of cyanate with bicarbonate to produce ammonia and carbon dioxide. The protein is Cyanate hydratase of Burkholderia thailandensis (strain ATCC 700388 / DSM 13276 / CCUG 48851 / CIP 106301 / E264).